Consider the following 265-residue polypeptide: NAD kinase 1 (265 aa).

D45 acts as the Proton acceptor in catalysis. Residues 45–46, 122–123, R148, D150, and A185 contribute to the NAD(+) site; these read DG and NE.

The protein belongs to the NAD kinase family. It depends on a divalent metal cation as a cofactor.

It localises to the cytoplasm. The enzyme catalyses NAD(+) + ATP = ADP + NADP(+) + H(+). In terms of biological role, involved in the regulation of the intracellular balance of NAD and NADP, and is a key enzyme in the biosynthesis of NADP. Catalyzes specifically the phosphorylation on 2'-hydroxyl of the adenosine moiety of NAD to yield NADP. This chain is NAD kinase 1, found in Bacillus cereus (strain ATCC 10987 / NRS 248).